Here is a 2729-residue protein sequence, read N- to C-terminus: MQGNHDGSWSLHPSTNNGSGRANGNININTVPGGGYLPQANPVFPNFNQPIRYPIPQFPANFYRPNFPDFSLGNPNFQPHQNLNFLHQQIPHQYGSAANHFLQNHNQNSFSFPPQSIPNNDISISQNHGAFENSSLKRRRQEEVVQVTDVVPKSNFASGESANNSFSVSLPIPIATDDSGVSRVHGEKSSGKPKRKVDVLRIDKAVNKTRKLFVAAGESVSSTRVSRAVLEELQADSWRSLGVQMQDVPSLRQLMAIEGKINAFIHCFVGARRIVTLHDLEVAICRNEFVDSFDDLELGPLLQHPLVLLYFPSISSSTGPVKITSEEIISFLDSYLHTYMTEDVKLDEFLNFVASQKSVTSKEKLGVRIQSLRMYVSFILDAKRQEGETLKVLLTELHQKYHIPSSKKQQRDKSLTVSERADSFALHHKDYCGKHIRFDSSSSDENDNVYEVRNLNSSDHINSCPYPSVAEEMKRLGGSNKKRKGERRNHEKSDSSKLLRKSPSKLQGHAKQEIPKLADDSEAKKVFSVDEADFTLSEGDLRLFISTWKDTCKELSISTFVEKMLSFYNLGGSEGRAQIKRAKAMSSFPFVGLLNVAVTSLRRGMWDSIYDNFQMTSLSDTTNTGSGNQVGEINPIENSELSKTQHVMPPTHCNTVEEIIRRLSLYFEHDLSGAKHIGIFRKLQTCENLLAEQFQVQDFESLGWGGFFAFLEKHMLLLPTQLQRFLSRELQEEFPLEVHVNENLLTLLLSQASEFSSDKVLSRQTLARLVAEQFPSISFKVVGRDSEENFSEIIGKKKSSSKCVLFSATLLGAENSLTSKYLEESLTVGNDTEARSTTLNAVASKEVLDVLLRVPLLSDLNSWCHWDLRYAPQFGPLMGCLNEINSTDLLCLVTRDGKIIRADPSATADSFLEAALQGSAYRTAAQLLSLISLNGRTHLPFSLLKCYAKRAFEVFFYNYSEEMELNDRNSLVQMHGPEKLSTSFDKVIVVGEKAKVAKRDYAASKFLLDCLGYLPGEFRSLVVDILLPGLRSVVKDAPTRVLSACEQTEQRIMLHDAGLLLGIVEWISDYHKFCSSCSPNSSIVENASSNLDSGAGFVQNELEDPVQTKQRCMIVSEKSCEYKEEPHESCHTFGGSGILCDSVGEAFTQTAPEFYDNRASVIDSIRRDEFGLDLTSSGSEMSMLQKQHARLGRALQCLSQELYSQDSHFILELVQNADDNKYPEHVEPTLTFILQKTGIVVLNNECGFMPENIRALCDVGQSTKKGSGGYIGKKGIGFKSVFRVSDAPEIHSNGFHFKFDISEGQIGYILPTVVPPHDIESLSSMLSGRALHLKDAGWNTCITLPFRAIDSERTTVNHIEPMFSDLHPSLLLFLHRLQCIVYRNVLDDSLLVMRKEVVSKNIVKVSCGENSMTWFVASEKLKATNLRDDVQTTEISIGFTLDMLEDGTYRSCMIQEPVFAFLPLRTYGLKFIIQGDFILTSSREDVDEDSPWNQWLLSEFPGLFVDALRSFCSLPSFTQNLGKGVSSYMQLVPLVGEVHGFFSSLPRSIISRLRTTNCLLLEGDGEEWVPPCKVLRNWNEKIRVLLKDGLLQEHLALGFLDKDIVLSDSLSRALGIEDYGPKTLVQILSSLSHKNGCLQSMGFTWLSSILTELYLLFRSSGHGNVELGIDKSLIDDLHKIPFIPLSNGKFTSLDEGAVWLHHDTTGLDLGDVFEAFPVLYGNLRTIDHSLLLASSVDEKSSVDDLVNMLCAIGVQKLSAHEIVKAHILPAFEARSTGAVDGLMVDYLCFVMTHLRSGCHICLKERKYIISELRSKALVLSNYGLKQLGEGSIHFGEEYGNQVNMKKLTKNLDISWHVVDGTYLKHPASKFYACGLKEWREFFQEIGIADFVQVVQVEKSIAEFYSVSHCEKYDINLLSPDLTVKDWESPELVDLLSLLHKSNGRKGCKYLLEVLDRLWDDCYYDKTTVNYNSGTHGIIRSSESSFMRVICDSLWIVSSMDSKLHLSKDLYHDCDDVQSILGMNAPYAVPTVTSVKLLSDIGFKTKVSLDDALEVLESWVHCGDSFKSSISQITRFYKYLWNEMADSKQKITEKLHTLPSVFVPHGIASRQNDMISGIFLSLDDVYWNDSAGVLDEIKEISSQISSVVEPLRRKTLGNIYPGLHDFFVNGCGVPETPSFQEYLKILGQFAHNVSPSSAAKAVFKIFLKWSDDLNSGKSSEDVIHFKERLSELEYTVLPTENDKWVSLHSSFGLVCWCDNEKLKKRFKNKDKIEFISFGENDDEGQEVLQTKVSGLMHSLGIPSISEVVKREAKYEGLQDNTVTVSLVNWALPYAQRYIFTLHHEKYTQTKKTVHSQVKRLQVFVVDKLSYRNVIPQYGISSKKEFKCSSLLQDKALYTTPSLDSHSLFMELSRLFFNGVPDLHLANFLHLIKTMAESGLSEEQMESFILNSQKVHQVPDGEEIWSLKSAVKAKKKAGISLSWLPSSSKTRHGSSKTNTDDSKQELDTSSSKEDVTEALEEKIPIEMTNTNLVSGYDNCAGTSSRASEPNPLHSMHMISGSTSGNQAAMHLNPNLPHEWNNSFTANFSDRDQLHTGTPWAAQAQQTGRKGEEIAYRYFVAKYGNEALVKWVNDQSETGLPYDLMIENRGGKKEYVEVKATVSTRKDYFNLTVREWQFANEKGESYIIAHVLLGNSNAILTQHRNPVKLCQEGHLRLLVLMPNQRNEVNVTF.

Residues 1–27 form a disordered region; the sequence is MQGNHDGSWSLHPSTNNGSGRANGNIN. 2 consecutive short sequence motifs (nuclear localization signal) follow at residues 194 to 201 and 473 to 480; these read KRKVDVLR and MKRLGGSN. Disordered stretches follow at residues 477 to 517 and 2482 to 2515; these read GGSN…IPKL and LPSS…DVTE. 2 stretches are compositionally biased toward basic and acidic residues: residues 488-497 and 2496-2515; these read RNHEKSDSSK and NTDD…DVTE.

Specifically expressed in developing embryos, leaf primordia, and shoot and root apical meristems.

It localises to the nucleus. Essential protein required for cell fate determination during embryogenesis. Mediates auxin-dependent coordinated cell-fate specification and patterning in embryos (e.g. cotyledon outgrowth and separation), shoots and roots (e.g. leaf vascular development, cellular patterning and stem cell maintenance in the meristems). Required for provascular PIN1 expression and region-specific expression of PIN7 in leaf primordia, cell type-specific expression of PIN3, PIN4, and PIN7 in the root, and PIN2 polarity in the root cortex. In Arabidopsis thaliana (Mouse-ear cress), this protein is Protein NO VEIN.